We begin with the raw amino-acid sequence, 752 residues long: Phosphoribosylformylglycinamidine synthase subunit PurL (752 aa).

His58 is an active-site residue. 2 residues coordinate ATP: Tyr61 and Lys103. Mg(2+) is bound at residue Glu105. Substrate-binding positions include 106 to 109 (SHNH) and Arg128. The Proton acceptor role is filled by His107. A Mg(2+)-binding site is contributed by Asp129. Gln253 lines the substrate pocket. Asp281 serves as a coordination point for Mg(2+). Position 325–327 (325–327 (ESQ)) interacts with substrate. Residues Asp513 and Gly550 each coordinate ATP. Asn551 is a Mg(2+) binding site. Residue Ser553 coordinates substrate.

This sequence belongs to the FGAMS family. In terms of assembly, monomer. Part of the FGAM synthase complex composed of 1 PurL, 1 PurQ and 2 PurS subunits.

It localises to the cytoplasm. The enzyme catalyses N(2)-formyl-N(1)-(5-phospho-beta-D-ribosyl)glycinamide + L-glutamine + ATP + H2O = 2-formamido-N(1)-(5-O-phospho-beta-D-ribosyl)acetamidine + L-glutamate + ADP + phosphate + H(+). It functions in the pathway purine metabolism; IMP biosynthesis via de novo pathway; 5-amino-1-(5-phospho-D-ribosyl)imidazole from N(2)-formyl-N(1)-(5-phospho-D-ribosyl)glycinamide: step 1/2. Part of the phosphoribosylformylglycinamidine synthase complex involved in the purines biosynthetic pathway. Catalyzes the ATP-dependent conversion of formylglycinamide ribonucleotide (FGAR) and glutamine to yield formylglycinamidine ribonucleotide (FGAM) and glutamate. The FGAM synthase complex is composed of three subunits. PurQ produces an ammonia molecule by converting glutamine to glutamate. PurL transfers the ammonia molecule to FGAR to form FGAM in an ATP-dependent manner. PurS interacts with PurQ and PurL and is thought to assist in the transfer of the ammonia molecule from PurQ to PurL. The polypeptide is Phosphoribosylformylglycinamidine synthase subunit PurL (Streptomyces avermitilis (strain ATCC 31267 / DSM 46492 / JCM 5070 / NBRC 14893 / NCIMB 12804 / NRRL 8165 / MA-4680)).